Here is a 154-residue protein sequence, read N- to C-terminus: 6,7-dimethyl-8-ribityllumazine synthase (154 aa).

5-amino-6-(D-ribitylamino)uracil contacts are provided by residues F22, 56–58 (AFE), and 80–82 (AVI). 85 to 86 (AT) lines the (2S)-2-hydroxy-3-oxobutyl phosphate pocket. H88 serves as the catalytic Proton donor. F113 provides a ligand contact to 5-amino-6-(D-ribitylamino)uracil. R127 provides a ligand contact to (2S)-2-hydroxy-3-oxobutyl phosphate.

Belongs to the DMRL synthase family.

The catalysed reaction is (2S)-2-hydroxy-3-oxobutyl phosphate + 5-amino-6-(D-ribitylamino)uracil = 6,7-dimethyl-8-(1-D-ribityl)lumazine + phosphate + 2 H2O + H(+). It participates in cofactor biosynthesis; riboflavin biosynthesis; riboflavin from 2-hydroxy-3-oxobutyl phosphate and 5-amino-6-(D-ribitylamino)uracil: step 1/2. Its function is as follows. Catalyzes the formation of 6,7-dimethyl-8-ribityllumazine by condensation of 5-amino-6-(D-ribitylamino)uracil with 3,4-dihydroxy-2-butanone 4-phosphate. This is the penultimate step in the biosynthesis of riboflavin. In Desulfitobacterium hafniense (strain DSM 10664 / DCB-2), this protein is 6,7-dimethyl-8-ribityllumazine synthase.